Reading from the N-terminus, the 136-residue chain is UPF0225 protein Pnap_0466 (136 aa).

The protein belongs to the UPF0225 family.

The chain is UPF0225 protein Pnap_0466 from Polaromonas naphthalenivorans (strain CJ2).